The following is a 106-amino-acid chain: Replication restart protein PriB (106 aa).

The region spanning 4 to 103 (VNRLVLSGTV…LHAEQIELID (100 aa)) is the SSB domain.

This sequence belongs to the PriB family. Homodimer. Interacts with PriA and DnaT. Component of the replication restart primosome. Primosome assembly occurs via a 'hand-off' mechanism. PriA binds to replication forks, subsequently PriB then DnaT bind; DnaT then displaces ssDNA to generate the helicase loading substrate.

In terms of biological role, involved in the restart of stalled replication forks, which reloads the replicative helicase on sites other than the origin of replication; the PriA-PriB pathway is the major replication restart pathway. During primosome assembly it facilitates complex formation between PriA and DnaT on DNA; stabilizes PriA on DNA. Stimulates the DNA unwinding activity of PriA helicase. This Pectobacterium carotovorum subsp. carotovorum (strain PC1) protein is Replication restart protein PriB.